The following is a 77-amino-acid chain: Cell division topological specificity factor (77 aa).

This sequence belongs to the MinE family.

Functionally, prevents the cell division inhibition by proteins MinC and MinD at internal division sites while permitting inhibition at polar sites. This ensures cell division at the proper site by restricting the formation of a division septum at the midpoint of the long axis of the cell. The protein is Cell division topological specificity factor of Helicobacter acinonychis (strain Sheeba).